A 148-amino-acid polypeptide reads, in one-letter code: Hemoglobin subunit gamma (148 aa).

A Globin domain is found at 3–148 (HFTAEEKAII…VAIAMGHKYH (146 aa)). Residues His-64 and His-93 each coordinate heme b.

It belongs to the globin family. In terms of assembly, heterotetramer of two alpha chains and two gamma chains in fetal hemoglobin (Hb F). Red blood cells.

Gamma chains make up the fetal hemoglobin F, in combination with alpha chains. In Carlito syrichta (Philippine tarsier), this protein is Hemoglobin subunit gamma (HBG).